The following is a 243-amino-acid chain: Putative C-type lectin protein A7 (243 aa).

Residues I23–A43 traverse the membrane as a helical segment. The 108-residue stretch at G116–G223 folds into the C-type lectin domain. Disulfide bonds link C137-C222 and C198-C214.

The protein localises to the host membrane. The polypeptide is Putative C-type lectin protein A7 (A7) (Alcelaphine herpesvirus 1 (strain C500) (AlHV-1)).